A 453-amino-acid chain; its full sequence is MSFDLIIKNGTVILENEARVIDIAVQGGKIAAIGENLGEAKNVLDATGLIVSPGMVDAHTHISEPGRTHWEGYETGTRAAAKGGITTMIEMPLNQLPATVDRETIELKFDAAKGKLTIDAAQLGGLVSYNLDRLHELDEVGVVGFKCFVATCGDRGIDNDFRDVNDWQFYKGAQKLGEMDQTVLVHCENALICDELGEEAKREGRVTAHDYVASRPVFTEVEAIRRVLYLAKAAGCRLHVCHISSPEGVEEVTRARQEGQDVTCESCPHYFVLDTDQFEEIGTLAKCSPPIRDQENQKGMWEKLFNGEIDCLVSDHSPCPPEMKAGNIMQAWGGIAGLQNCMDVMFDEAVQKRGMSLPMFGKLMATNAADIFGLKHKGRIAPGKEADLVFIQPDSSYVLKNEDLEYRHKVSPYVGRTIGARITKTILRGDVIYDIEHGFPVPPKGQFILKHQQ.

Positions 59, 61, 146, 186, 242, and 315 each coordinate Zn(2+). At Lys-146 the chain carries N6-carboxylysine.

This sequence belongs to the metallo-dependent hydrolases superfamily. Allantoinase family. As to quaternary structure, homotetramer. The cofactor is Zn(2+). Carboxylation allows a single lysine to coordinate two zinc ions.

The enzyme catalyses (S)-allantoin + H2O = allantoate + H(+). It functions in the pathway nitrogen metabolism; (S)-allantoin degradation; allantoate from (S)-allantoin: step 1/1. Its function is as follows. Catalyzes the conversion of allantoin (5-ureidohydantoin) to allantoic acid by hydrolytic cleavage of the five-member hydantoin ring. The chain is Allantoinase from Salmonella paratyphi B (strain ATCC BAA-1250 / SPB7).